A 127-amino-acid chain; its full sequence is Protein ApaG (127 aa).

The 125-residue stretch at 3–127 folds into the ApaG domain; the sequence is KDKRYAFSVK…FQLNMPRVLH (125 aa).

This is Protein ApaG from Methylobacillus flagellatus (strain ATCC 51484 / DSM 6875 / VKM B-1610 / KT).